Consider the following 96-residue polypeptide: MSAVIMQQGDLLLNLYIQPKASRDQIVGLHGDELKVAITAPPIDGKANAHLSKYLAKAFKVPKSDVHILKGELGRHKQVRINAPKSVPAEISALLE.

Belongs to the UPF0235 family.

This Shewanella oneidensis (strain ATCC 700550 / JCM 31522 / CIP 106686 / LMG 19005 / NCIMB 14063 / MR-1) protein is UPF0235 protein SO_3356.